A 752-amino-acid polypeptide reads, in one-letter code: Photosystem I P700 chlorophyll a apoprotein A1 (752 aa).

Transmembrane regions (helical) follow at residues 73–96, 159–182, 198–222, 294–312, 349–372, 388–414, 436–458, and 533–551; these read IFAA…FHGA, LYCT…FHYH, LNHH…HVSA, IAHH…GHQY, WHAQ…HHMY, LCIF…IFMV, AIIS…LYIH, and FLIH…LILL. The [4Fe-4S] cluster site is built by Cys-575 and Cys-584. 2 helical membrane-spanning segments follow: residues 591–612 and 666–688; these read HVFL…HFSW and LSAY…MFLF. Residue His-677 coordinates chlorophyll a'. Met-685 and Tyr-693 together coordinate chlorophyll a. Trp-694 serves as a coordination point for phylloquinone. The helical transmembrane segment at 726–746 threads the bilayer; the sequence is AVGVAHYLLGGIATTWAFFHA.

Belongs to the PsaA/PsaB family. The PsaA/B heterodimer binds the P700 chlorophyll special pair and subsequent electron acceptors. PSI consists of a core antenna complex that captures photons, and an electron transfer chain that converts photonic excitation into a charge separation. The cyanobacterial PSI reaction center is composed of one copy each of PsaA,B,C,D,E,F,I,J,K,L,M and X, and forms trimeric complexes. PSI electron transfer chain: 5 chlorophyll a, 1 chlorophyll a', 2 phylloquinones and 3 4Fe-4S clusters. PSI core antenna: 90 chlorophyll a, 22 carotenoids, 3 phospholipids and 1 galactolipid. P700 is a chlorophyll a/chlorophyll a' dimer, A0 is one or more chlorophyll a, A1 is one or both phylloquinones and FX is a shared 4Fe-4S iron-sulfur center. serves as cofactor.

Its subcellular location is the cellular thylakoid membrane. It catalyses the reaction reduced [plastocyanin] + hnu + oxidized [2Fe-2S]-[ferredoxin] = oxidized [plastocyanin] + reduced [2Fe-2S]-[ferredoxin]. Functionally, psaA and PsaB bind P700, the primary electron donor of photosystem I (PSI), as well as the electron acceptors A0, A1 and FX. PSI is a plastocyanin/cytochrome c6-ferredoxin oxidoreductase, converting photonic excitation into a charge separation, which transfers an electron from the donor P700 chlorophyll pair to the spectroscopically characterized acceptors A0, A1, FX, FA and FB in turn. Oxidized P700 is reduced on the lumenal side of the thylakoid membrane by plastocyanin or cytochrome c6. This is Photosystem I P700 chlorophyll a apoprotein A1 from Nostoc sp. (strain PCC 7120 / SAG 25.82 / UTEX 2576).